We begin with the raw amino-acid sequence, 280 residues long: 2-dehydro-3-deoxyphosphooctonate aldolase (280 aa).

Belongs to the KdsA family.

It localises to the cytoplasm. The catalysed reaction is D-arabinose 5-phosphate + phosphoenolpyruvate + H2O = 3-deoxy-alpha-D-manno-2-octulosonate-8-phosphate + phosphate. It functions in the pathway carbohydrate biosynthesis; 3-deoxy-D-manno-octulosonate biosynthesis; 3-deoxy-D-manno-octulosonate from D-ribulose 5-phosphate: step 2/3. The protein operates within bacterial outer membrane biogenesis; lipopolysaccharide biosynthesis. The polypeptide is 2-dehydro-3-deoxyphosphooctonate aldolase (Thiobacillus denitrificans (strain ATCC 25259 / T1)).